Consider the following 273-residue polypeptide: Phosphate import ATP-binding protein PstB (273 aa).

The ABC transporter domain maps to 17 to 259 (LSAENLSIFY…DKTNNIFQNP (243 aa)). An ATP-binding site is contributed by 49-56 (GPSGCGKS).

This sequence belongs to the ABC transporter superfamily. Phosphate importer (TC 3.A.1.7) family. The complex is composed of two ATP-binding proteins (PstB), two transmembrane proteins (PstC and PstA) and a solute-binding protein (PstS).

The protein resides in the cell inner membrane. It carries out the reaction phosphate(out) + ATP + H2O = ADP + 2 phosphate(in) + H(+). In terms of biological role, part of the ABC transporter complex PstSACB involved in phosphate import. Responsible for energy coupling to the transport system. This Trichodesmium erythraeum (strain IMS101) protein is Phosphate import ATP-binding protein PstB.